The following is a 157-amino-acid chain: Small ribosomal subunit protein uS9 (157 aa).

This sequence belongs to the universal ribosomal protein uS9 family.

The polypeptide is Small ribosomal subunit protein uS9 (Caulobacter vibrioides (strain ATCC 19089 / CIP 103742 / CB 15) (Caulobacter crescentus)).